Reading from the N-terminus, the 189-residue chain is Elongation factor P (189 aa).

Lys35 carries the N6-(3,6-diaminohexanoyl)-5-hydroxylysine modification.

It belongs to the elongation factor P family. May be beta-lysylated on the epsilon-amino group of Lys-35 by the combined action of EpmA and EpmB, and then hydroxylated on the C5 position of the same residue by EpmC (if this protein is present). Lysylation is critical for the stimulatory effect of EF-P on peptide-bond formation. The lysylation moiety may extend toward the peptidyltransferase center and stabilize the terminal 3-CCA end of the tRNA. Hydroxylation of the C5 position on Lys-35 may allow additional potential stabilizing hydrogen-bond interactions with the P-tRNA.

The protein resides in the cytoplasm. The protein operates within protein biosynthesis; polypeptide chain elongation. Involved in peptide bond synthesis. Alleviates ribosome stalling that occurs when 3 or more consecutive Pro residues or the sequence PPG is present in a protein, possibly by augmenting the peptidyl transferase activity of the ribosome. Modification of Lys-35 is required for alleviation. This chain is Elongation factor P, found in Wigglesworthia glossinidia brevipalpis.